We begin with the raw amino-acid sequence, 2312 residues long: Protein Ycf2 (2312 aa).

1630-1637 (GSIGTGRS) serves as a coordination point for ATP.

The protein belongs to the Ycf2 family.

It is found in the plastid. Its subcellular location is the chloroplast stroma. Probable ATPase of unknown function. Its presence in a non-photosynthetic plant (Epifagus virginiana) and experiments in tobacco indicate that it has an essential function which is probably not related to photosynthesis. This Manihot esculenta (Cassava) protein is Protein Ycf2.